The primary structure comprises 487 residues: Malonate-semialdehyde dehydrogenase 2 (487 aa).

Residues phenylalanine 154, lysine 178, glutamate 181, arginine 182, and serine 231 each coordinate NAD(+). Cysteine 286 serves as the catalytic Nucleophile. Residue glutamate 386 participates in NAD(+) binding.

It belongs to the aldehyde dehydrogenase family. IolA subfamily. As to quaternary structure, homotetramer.

The catalysed reaction is 3-oxopropanoate + NAD(+) + CoA + H2O = hydrogencarbonate + acetyl-CoA + NADH + H(+). The enzyme catalyses 2-methyl-3-oxopropanoate + NAD(+) + CoA + H2O = propanoyl-CoA + hydrogencarbonate + NADH + H(+). The protein operates within polyol metabolism; myo-inositol degradation into acetyl-CoA; acetyl-CoA from myo-inositol: step 7/7. Its function is as follows. Catalyzes the oxidation of malonate semialdehyde (MSA) and methylmalonate semialdehyde (MMSA) into acetyl-CoA and propanoyl-CoA, respectively. Is involved in a myo-inositol catabolic pathway. Bicarbonate, and not CO2, is the end-product of the enzymatic reaction. This is Malonate-semialdehyde dehydrogenase 2 from Bacillus thuringiensis (strain Al Hakam).